The primary structure comprises 430 residues: 3-phosphoshikimate 1-carboxyvinyltransferase (430 aa).

The 3-phosphoshikimate site is built by K20, S21, and R25. K20 contributes to the phosphoenolpyruvate binding site. Residues G92 and R120 each coordinate phosphoenolpyruvate. Positions 166, 168, 312, and 339 each coordinate 3-phosphoshikimate. Q168 provides a ligand contact to phosphoenolpyruvate. D312 serves as the catalytic Proton acceptor. Phosphoenolpyruvate-binding residues include R343 and R387.

The protein belongs to the EPSP synthase family. Monomer.

The protein localises to the cytoplasm. The catalysed reaction is 3-phosphoshikimate + phosphoenolpyruvate = 5-O-(1-carboxyvinyl)-3-phosphoshikimate + phosphate. It functions in the pathway metabolic intermediate biosynthesis; chorismate biosynthesis; chorismate from D-erythrose 4-phosphate and phosphoenolpyruvate: step 6/7. In terms of biological role, catalyzes the transfer of the enolpyruvyl moiety of phosphoenolpyruvate (PEP) to the 5-hydroxyl of shikimate-3-phosphate (S3P) to produce enolpyruvyl shikimate-3-phosphate and inorganic phosphate. The protein is 3-phosphoshikimate 1-carboxyvinyltransferase of Lactococcus lactis subsp. lactis (strain IL1403) (Streptococcus lactis).